Consider the following 222-residue polypeptide: L-cystine transport system permease protein TcyL (222 aa).

The Periplasmic portion of the chain corresponds to Met-1 to Thr-22. Residues Ala-19–Gln-207 enclose the ABC transmembrane type-1 domain. The helical transmembrane segment at Leu-23 to Met-43 threads the bilayer. Topologically, residues Arg-44 to Gly-64 are cytoplasmic. Residues Thr-65 to Leu-85 form a helical membrane-spanning segment. Over Asp-86–Thr-182 the chain is Periplasmic. The chain crosses the membrane as a helical span at residues Leu-183–Leu-203. Topologically, residues Ser-204–Lys-222 are cytoplasmic.

Belongs to the binding-protein-dependent transport system permease family. HisMQ subfamily. The complex is composed of two ATP-binding proteins (TcyN), two transmembrane proteins (TcyL) and a solute-binding protein (TcyJ).

It localises to the cell inner membrane. In terms of biological role, part of the ABC transporter complex TcyJLN involved in L-cystine import. Responsible for the translocation of the substrate across the membrane. The polypeptide is L-cystine transport system permease protein TcyL (Escherichia coli O6:H1 (strain CFT073 / ATCC 700928 / UPEC)).